We begin with the raw amino-acid sequence, 102 residues long: Monothiol glutaredoxin-S6 (102 aa).

Residues 1–101 form the Glutaredoxin domain; sequence MESVRSLVED…AMLRRAGAIW (101 aa). Cys-21 lines the [2Fe-2S] cluster pocket.

Belongs to the glutaredoxin family. CC-type subfamily.

The protein resides in the cytoplasm. In terms of biological role, may only reduce GSH-thiol disulfides, but not protein disulfides. The polypeptide is Monothiol glutaredoxin-S6 (GRXS6) (Arabidopsis thaliana (Mouse-ear cress)).